We begin with the raw amino-acid sequence, 406 residues long: Secretion apparatus protein BsaZ (406 aa).

A run of 4 helical transmembrane segments spans residues 28–48 (IVAL…VDLT), 80–100 (IAAP…LVQS), 137–157 (ALLY…LYHA), and 175–195 (IVLT…VLIL). The interval 341 to 406 (AANRGGPPPE…APARTGDQNA (66 aa)) is disordered. The segment covering 370-399 (DACADNAFPDDAPPGAAAPNAGSPDGGAPA) has biased composition (low complexity).

The protein belongs to the type III secretion exporter family.

Its subcellular location is the cell membrane. Its function is as follows. Part of the bsa type III secretion system, is involved in the intracellular replication of invading bacteria inside the host cell. Probably necessary for the lysis of the vacuole membrane and escape into the host cell cytoplasm. The sequence is that of Secretion apparatus protein BsaZ (bsaZ) from Burkholderia pseudomallei (strain 668).